The primary structure comprises 587 residues: Formate--tetrahydrofolate ligase (587 aa).

Residue 73-80 (TPLGEGKS) coordinates ATP.

This sequence belongs to the formate--tetrahydrofolate ligase family.

It carries out the reaction (6S)-5,6,7,8-tetrahydrofolate + formate + ATP = (6R)-10-formyltetrahydrofolate + ADP + phosphate. It functions in the pathway one-carbon metabolism; tetrahydrofolate interconversion. The chain is Formate--tetrahydrofolate ligase from Desulfosudis oleivorans (strain DSM 6200 / JCM 39069 / Hxd3) (Desulfococcus oleovorans).